Here is a 504-residue protein sequence, read N- to C-terminus: Anaerobic nitric oxide reductase transcription regulator NorR (504 aa).

A 4-aspartylphosphate modification is found at Asp-57. Residues 187 to 416 form the Sigma-54 factor interaction domain; the sequence is MIGLSPGMTQ…LEHAIHRAVV (230 aa). Residues 215–222 and 278–287 contribute to the ATP site; these read GETGTGKE and ADNGTLFLDE. The segment at residues 479 to 498 is a DNA-binding region (H-T-H motif); that stretch reads WAASARMLETDVANLHRLAK.

Its pathway is nitrogen metabolism; nitric oxide reduction. Its function is as follows. Required for the expression of anaerobic nitric oxide (NO) reductase, acts as a transcriptional activator for at least the norVW operon. Activation also requires sigma-54. The polypeptide is Anaerobic nitric oxide reductase transcription regulator NorR (Escherichia fergusonii (strain ATCC 35469 / DSM 13698 / CCUG 18766 / IAM 14443 / JCM 21226 / LMG 7866 / NBRC 102419 / NCTC 12128 / CDC 0568-73)).